A 324-amino-acid chain; its full sequence is Glyoxylate/hydroxypyruvate reductase B (324 aa).

Catalysis depends on residues Arg237 and Glu266. His285 acts as the Proton donor in catalysis.

Belongs to the D-isomer specific 2-hydroxyacid dehydrogenase family. GhrB subfamily. Homodimer.

Its subcellular location is the cytoplasm. It catalyses the reaction glycolate + NADP(+) = glyoxylate + NADPH + H(+). The catalysed reaction is (R)-glycerate + NAD(+) = 3-hydroxypyruvate + NADH + H(+). It carries out the reaction (R)-glycerate + NADP(+) = 3-hydroxypyruvate + NADPH + H(+). Catalyzes the NADPH-dependent reduction of glyoxylate and hydroxypyruvate into glycolate and glycerate, respectively. The sequence is that of Glyoxylate/hydroxypyruvate reductase B from Cronobacter sakazakii (strain ATCC BAA-894) (Enterobacter sakazakii).